The sequence spans 335 residues: Ethanol acetyltransferase 1 (335 aa).

The region spanning 48-300 is the AB hydrolase-1 domain; it reads PIVFVHGIFG…NSAHDILDQR (253 aa). Active-site charge relay system residues include serine 121, aspartate 145, and histidine 294.

The protein belongs to the AB hydrolase superfamily.

The protein resides in the mitochondrion. It catalyses the reaction ethanol + acetyl-CoA = ethyl acetate + CoA. The catalysed reaction is acetyl-CoA + H2O = acetate + CoA + H(+). It carries out the reaction ethyl acetate + H2O = ethanol + acetate + H(+). Functionally, alcohol acetyltransferase that catalyzes the synthesis of ethyl acetate from ethanol and acetyl-CoA. Can also function as a thioesterase by hydrolyzing acetyl-CoA in the absence of ethanol, as well as esterase hydrolyzing ethyl acetate. This Cyberlindnera fabianii (Yeast) protein is Ethanol acetyltransferase 1 (EAT1).